A 192-amino-acid polypeptide reads, in one-letter code: Peptidyl-tRNA hydrolase (192 aa).

The active-site Proton acceptor is H19. Residues Y64, N66, and N112 each contribute to the tRNA site.

It belongs to the PTH family. In terms of assembly, monomer.

The protein resides in the cytoplasm. The enzyme catalyses an N-acyl-L-alpha-aminoacyl-tRNA + H2O = an N-acyl-L-amino acid + a tRNA + H(+). Hydrolyzes ribosome-free peptidyl-tRNAs (with 1 or more amino acids incorporated), which drop off the ribosome during protein synthesis, or as a result of ribosome stalling. Its function is as follows. Catalyzes the release of premature peptidyl moieties from peptidyl-tRNA molecules trapped in stalled 50S ribosomal subunits, and thus maintains levels of free tRNAs and 50S ribosomes. In Acidiphilium cryptum (strain JF-5), this protein is Peptidyl-tRNA hydrolase.